The following is a 729-amino-acid chain: Fatty acid oxidation complex subunit alpha (729 aa).

The tract at residues 1–189 is enoyl-CoA hydratase/isomerase; that stretch reads MLYKGDTLYL…KIGLVDGVVK (189 aa). Asp296 contacts substrate. The interval 311–729 is 3-hydroxyacyl-CoA dehydrogenase; it reads ETPKQAAVLG…ARPVGDLKTA (419 aa). Residues Met324, Asp343, 400 to 402, Lys407, and Ser429 contribute to the NAD(+) site; that span reads VVE. His450 functions as the For 3-hydroxyacyl-CoA dehydrogenase activity in the catalytic mechanism. Asn453 is an NAD(+) binding site. Residues Asn500 and Tyr660 each coordinate substrate. A disordered region spans residues 708–729; the sequence is RHNEPYYPPVEPARPVGDLKTA.

The protein in the N-terminal section; belongs to the enoyl-CoA hydratase/isomerase family. It in the C-terminal section; belongs to the 3-hydroxyacyl-CoA dehydrogenase family. In terms of assembly, heterotetramer of two alpha chains (FadB) and two beta chains (FadA).

The catalysed reaction is a (3S)-3-hydroxyacyl-CoA + NAD(+) = a 3-oxoacyl-CoA + NADH + H(+). It carries out the reaction a (3S)-3-hydroxyacyl-CoA = a (2E)-enoyl-CoA + H2O. It catalyses the reaction a 4-saturated-(3S)-3-hydroxyacyl-CoA = a (3E)-enoyl-CoA + H2O. The enzyme catalyses (3S)-3-hydroxybutanoyl-CoA = (3R)-3-hydroxybutanoyl-CoA. The catalysed reaction is a (3Z)-enoyl-CoA = a 4-saturated (2E)-enoyl-CoA. It carries out the reaction a (3E)-enoyl-CoA = a 4-saturated (2E)-enoyl-CoA. Its pathway is lipid metabolism; fatty acid beta-oxidation. In terms of biological role, involved in the aerobic and anaerobic degradation of long-chain fatty acids via beta-oxidation cycle. Catalyzes the formation of 3-oxoacyl-CoA from enoyl-CoA via L-3-hydroxyacyl-CoA. It can also use D-3-hydroxyacyl-CoA and cis-3-enoyl-CoA as substrate. In Escherichia coli O17:K52:H18 (strain UMN026 / ExPEC), this protein is Fatty acid oxidation complex subunit alpha.